The primary structure comprises 187 residues: Large ribosomal subunit protein uL6 (187 aa).

The tract at residues E151 to K170 is disordered.

It belongs to the universal ribosomal protein uL6 family. As to quaternary structure, part of the 50S ribosomal subunit.

In terms of biological role, this protein binds to the 23S rRNA, and is important in its secondary structure. It is located near the subunit interface in the base of the L7/L12 stalk, and near the tRNA binding site of the peptidyltransferase center. This Chloroflexus aurantiacus (strain ATCC 29366 / DSM 635 / J-10-fl) protein is Large ribosomal subunit protein uL6.